Here is a 378-residue protein sequence, read N- to C-terminus: MGQSKKLNKQPSSLSPLVQLAGIRKCFDGKEVIPQLDLTINNGEFLTLLGPSGCGKTTVLRLIAGLETVDSGRIMLDNEDITHVPAENRYVNTVFQSYALFPHMTVFENVAFGLRMQKTPAAEITPRVMEALRMVQLETFAQRKPHQLSGGQQQRVAIARAVVNKPRLLLLDESLSALDYKLRKQMQNELKALQRKLGITFVFVTHDQEEALTMSDRIVVMRDGRIEQDGTPREIYEEPKNLFVAGFIGEINMFNATVIERLDEQRVRANVEGRECNIYVNFAVEPGQKLHVLLRPEDLRVEEINDDNHAEGLIGYVRERNYKGMTLESVVELENGKMVMVSEFFNEDDPDFDHSLDQKMAINWVESWEVVLADEEHK.

The 231-residue stretch at 18 to 248 folds into the ABC transporter domain; it reads VQLAGIRKCF…PKNLFVAGFI (231 aa). 50-57 contributes to the ATP binding site; sequence GPSGCGKT.

Belongs to the ABC transporter superfamily. Spermidine/putrescine importer (TC 3.A.1.11.1) family. The complex is composed of two ATP-binding proteins (PotA), two transmembrane proteins (PotB and PotC) and a solute-binding protein (PotD).

The protein localises to the cell inner membrane. It catalyses the reaction ATP + H2O + polyamine-[polyamine-binding protein]Side 1 = ADP + phosphate + polyamineSide 2 + [polyamine-binding protein]Side 1.. Its function is as follows. Part of the ABC transporter complex PotABCD involved in spermidine/putrescine import. Responsible for energy coupling to the transport system. This chain is Spermidine/putrescine import ATP-binding protein PotA, found in Shigella flexneri.